Reading from the N-terminus, the 381-residue chain is Cytochrome b (381 aa).

The next 4 membrane-spanning stretches (helical) occupy residues Phe34–Met54, Trp78–Ile99, Trp114–Leu134, and Phe179–Leu199. His84 and His98 together coordinate heme b. His183 and His197 together coordinate heme b. Position 202 (His202) interacts with a ubiquinone. 4 helical membrane passes run Tyr227–Ile247, Leu289–Gln309, Met321–Gly341, and Phe348–Pro368.

This sequence belongs to the cytochrome b family. The cytochrome bc1 complex contains 3 respiratory subunits (MT-CYB, CYC1 and UQCRFS1), 2 core proteins (UQCRC1 and UQCRC2) and probably 6 low-molecular weight proteins. It depends on heme b as a cofactor.

It localises to the mitochondrion inner membrane. Functionally, component of the ubiquinol-cytochrome c reductase complex (complex III or cytochrome b-c1 complex) that is part of the mitochondrial respiratory chain. The b-c1 complex mediates electron transfer from ubiquinol to cytochrome c. Contributes to the generation of a proton gradient across the mitochondrial membrane that is then used for ATP synthesis. The sequence is that of Cytochrome b (mt-cyb) from Galeocerdo cuvier (Tiger shark).